A 239-amino-acid chain; its full sequence is Probable transcriptional regulatory protein lin0388 (239 aa).

It belongs to the TACO1 family. YeeN subfamily.

Its subcellular location is the cytoplasm. In Listeria innocua serovar 6a (strain ATCC BAA-680 / CLIP 11262), this protein is Probable transcriptional regulatory protein lin0388.